Here is a 142-residue protein sequence, read N- to C-terminus: Large ribosomal subunit protein uL13 (142 aa).

The protein belongs to the universal ribosomal protein uL13 family. As to quaternary structure, part of the 50S ribosomal subunit.

Functionally, this protein is one of the early assembly proteins of the 50S ribosomal subunit, although it is not seen to bind rRNA by itself. It is important during the early stages of 50S assembly. The sequence is that of Large ribosomal subunit protein uL13 from Coxiella burnetii (strain CbuK_Q154) (Coxiella burnetii (strain Q154)).